The primary structure comprises 352 residues: Protein YpbB (352 aa).

In terms of assembly, interacts with RecS and SSB (ssbA); the 6 C-terminal residues of SSB are required for interaction with YpbB.

The protein resides in the cytoplasm. Its subcellular location is the nucleoid. The chain is Protein YpbB (ypbB) from Bacillus subtilis (strain 168).